The sequence spans 260 residues: tRNA pseudouridine synthase A (260 aa).

Residue Asp51 is the Nucleophile of the active site. Tyr109 contributes to the substrate binding site.

The protein belongs to the tRNA pseudouridine synthase TruA family. As to quaternary structure, homodimer.

The catalysed reaction is uridine(38/39/40) in tRNA = pseudouridine(38/39/40) in tRNA. Functionally, formation of pseudouridine at positions 38, 39 and 40 in the anticodon stem and loop of transfer RNAs. The polypeptide is tRNA pseudouridine synthase A (Albidiferax ferrireducens (strain ATCC BAA-621 / DSM 15236 / T118) (Rhodoferax ferrireducens)).